The chain runs to 339 residues: Formyl peptide receptor-related sequence 6 (339 aa).

Over 1-23 the chain is Extracellular; the sequence is MEANFSIPQNGSEVVFYDSTTSR. N-linked (GlcNAc...) asparagine glycans are attached at residues N4 and N10. A helical membrane pass occupies residues 24–44; sequence VICIFLVVVLSITFLLGVIGN. Topologically, residues 45-62 are cytoplasmic; that stretch reads GLVIYVAGFRMTHTVTTI. A helical transmembrane segment spans residues 63-85; it reads CYLNLALSDFSYMASLPFQITSI. The Extracellular segment spans residues 86 to 99; that stretch reads VMNGEWLFGWFLCK. A disulfide bond links C98 and C178. Residues 100-120 traverse the membrane as a helical segment; sequence FVHMIINVNLFLSIFLITFIA. Residues 121–144 lie on the Cytoplasmic side of the membrane; that stretch reads MDRCICVLHPVWAQNHRTVNVATK. A helical transmembrane segment spans residues 145 to 165; that stretch reads VIFGAWILVLMLIFPHCIFVT. The Extracellular portion of the chain corresponds to 166–198; that stretch reads TVKDESGKVHCICNFESWAATPEEQVKVSMTVS. The chain crosses the membrane as a helical span at residues 199 to 219; sequence LISVTISFIIGFSIPMIFIVI. Over 220–241 the chain is Cytoplasmic; sequence CYGLMAAKIGRRGFVNSSRPLR. Residues 242 to 262 traverse the membrane as a helical segment; sequence VLTAVAISFFVCWFPFQLIFL. The Extracellular segment spans residues 263 to 280; sequence LGNIGNKETQNNIDTWVN. Residues 281-301 traverse the membrane as a helical segment; that stretch reads TASTLASFNSCLNPILYVFLG. Residues 302–339 are Cytoplasmic-facing; the sequence is QQFRERLIYSLSASLERALREDSALNSDKTRNLSSQRL.

It belongs to the G-protein coupled receptor 1 family. As to expression, expressed exclusively in vomeronasal tissue. Expressed in 1.2 % of a subset of sensory neurons located in the apical layer of the vomeronasal organ. Each neuron appears to express only one receptor gene. Expressed in brain, spleen, skeletal muscle and at high level in testis.

The protein localises to the membrane. Functionally, may have an olfactory function associated with the identification of pathogens or of pathogenic states. This chain is Formyl peptide receptor-related sequence 6 (Fpr-rs6), found in Mus musculus (Mouse).